A 482-amino-acid polypeptide reads, in one-letter code: Protein DETOXIFICATION 9 (482 aa).

Helical transmembrane passes span 32-49 (VASM…QYLL), 64-84 (ALAG…GVLF), 111-131 (FTSI…WMFM), 144-164 (IAEL…GYSV), 180-200 (PMVL…WLMV), 209-229 (GAAA…WVYM), 261-281 (AMMC…SGLL), 289-309 (SVIS…NGIG), 332-352 (AAAA…SLFL), 374-394 (ITPI…LSGI), 403-423 (IGAY…GLLL), and 435-455 (WAGL…VIGF).

It belongs to the multi antimicrobial extrusion (MATE) (TC 2.A.66.1) family.

Its subcellular location is the membrane. This Arabidopsis thaliana (Mouse-ear cress) protein is Protein DETOXIFICATION 9.